Here is a 580-residue protein sequence, read N- to C-terminus: Glutamine--tRNA ligase (580 aa).

Positions 41-51 (PEPNGYLHIGH) match the 'HIGH' region motif. ATP-binding positions include 42–44 (EPN) and 48–54 (HIGHAKA). L-glutamine-binding residues include aspartate 74 and tyrosine 218. ATP contacts are provided by residues threonine 237, 285–286 (RL), and 293–295 (MSK). The short motif at 292-296 (VMSKR) is the 'KMSKS' region element.

The protein belongs to the class-I aminoacyl-tRNA synthetase family. In terms of assembly, monomer.

The protein resides in the cytoplasm. The enzyme catalyses tRNA(Gln) + L-glutamine + ATP = L-glutaminyl-tRNA(Gln) + AMP + diphosphate. This Xylella fastidiosa (strain M12) protein is Glutamine--tRNA ligase.